The following is a 556-amino-acid chain: Arginine--tRNA ligase (556 aa).

The short motif at 132–142 (ANPTGPIHLGG) is the 'HIGH' region element.

Belongs to the class-I aminoacyl-tRNA synthetase family. As to quaternary structure, monomer.

The protein resides in the cytoplasm. The enzyme catalyses tRNA(Arg) + L-arginine + ATP = L-arginyl-tRNA(Arg) + AMP + diphosphate. The polypeptide is Arginine--tRNA ligase (Kocuria rhizophila (strain ATCC 9341 / DSM 348 / NBRC 103217 / DC2201)).